Consider the following 882-residue polypeptide: Ubiquitin carboxyl-terminal hydrolase 4 (882 aa).

The region spanning 182 to 308 (YDSSLLLIDV…WVSKKGACET (127 aa)) is the Rhodanese domain. Residues 382-399 (KAKSSSTSSVTSSSPAPS) are compositionally biased toward low complexity. The interval 382-411 (KAKSSSTSSVTSSSPAPSQLVRPQTSSMPP) is disordered. Positions 402 to 411 (VRPQTSSMPP) are enriched in polar residues. One can recognise a USP domain in the interval 519–879 (VGLENMGNSC…NAYVLFYHRV (361 aa)). Cysteine 528 functions as the Nucleophile in the catalytic mechanism. Histidine 836 functions as the Proton acceptor in the catalytic mechanism.

The protein belongs to the peptidase C19 family.

It localises to the cytoplasm. Its subcellular location is the late endosome membrane. The enzyme catalyses Thiol-dependent hydrolysis of ester, thioester, amide, peptide and isopeptide bonds formed by the C-terminal Gly of ubiquitin (a 76-residue protein attached to proteins as an intracellular targeting signal).. RFU1 is an inhibitor of deubiquitination activity. In terms of biological role, ubiquitin thioesterase that acts at the late endosome/prevacuolar compartment to recover ubiquitin from ubiquitinated membrane proteins en route to the vacuole. Also removes ubiquitin from soluble proteins targeted to proteasomes. Is essential to maintain a normal level of free ubiquitin. Required for promoting coordination of DNA replication and avoids DNA overreplication. The chain is Ubiquitin carboxyl-terminal hydrolase 4 (DOA4) from Vanderwaltozyma polyspora (strain ATCC 22028 / DSM 70294 / BCRC 21397 / CBS 2163 / NBRC 10782 / NRRL Y-8283 / UCD 57-17) (Kluyveromyces polysporus).